We begin with the raw amino-acid sequence, 344 residues long: MLTLGLESSCDETACALVDANAKIVANVVFSQQDHVSYGGIVPELASRAHLQVFPSVVQSALKESGVSLEDIDLFAVTHTPGLIGALAIGVNFAKGLAVGCQKPIIGVNHVEAHLYAAYMEASSVEFPALGLVVSGAHTAIFLMEDPLTYKLIGKSRDDAIGETFDKVARFLGLPYPGGALIEKLAVHGCESSYPFSPSKVPGYDLSFSGLKTAVLYAIKGNNSNHRTPLPELSESQKNNISASFQKAAFTSVAQKLPNIVKKFSCRSLLVGGGVANNKYFQSLLKNTLDLPLYFPSSKLCTDNAAMIAGLGRELFLSEKITSGITPCARYQWESASVSLSPLP.

Positions 110 and 114 each coordinate Fe cation. Residues 133–137 (VVSGA), Asp-166, Gly-179, and Asn-278 contribute to the substrate site. Position 303 (Asp-303) interacts with Fe cation.

The protein belongs to the KAE1 / TsaD family. Fe(2+) is required as a cofactor.

It is found in the cytoplasm. It catalyses the reaction L-threonylcarbamoyladenylate + adenosine(37) in tRNA = N(6)-L-threonylcarbamoyladenosine(37) in tRNA + AMP + H(+). Functionally, required for the formation of a threonylcarbamoyl group on adenosine at position 37 (t(6)A37) in tRNAs that read codons beginning with adenine. Is involved in the transfer of the threonylcarbamoyl moiety of threonylcarbamoyl-AMP (TC-AMP) to the N6 group of A37, together with TsaE and TsaB. TsaD likely plays a direct catalytic role in this reaction. In Chlamydia abortus (strain DSM 27085 / S26/3) (Chlamydophila abortus), this protein is tRNA N6-adenosine threonylcarbamoyltransferase.